The following is a 180-amino-acid chain: Succinate dehydrogenase cytochrome B subunit, mitochondrial (180 aa).

The Mitochondrial matrix portion of the chain corresponds to 1–82 (MFATRSFCLS…WYLSSLHRIT (82 aa)). The helical transmembrane segment at 83 to 103 (GCVVAGTLYAFAMGYLVAPLA) threads the bilayer. Over 104-122 (GYSLDTATISGLIQQVPTW) the chain is Mitochondrial intermembrane. Residues 123 to 143 (IKVPAKFVISYPLTFHIFNGI) form a helical membrane-spanning segment. Heme is bound at residue His-138. Residues 144-159 (RHLIWDTTKELSLKGV) are Mitochondrial matrix-facing. Residues 160–180 (YRTGYAVLALSVLTSGYFAMI) traverse the membrane as a helical segment.

It belongs to the cytochrome b560 family. Forms part of complex II containing four subunits: a 70 kDa flavoprotein (FP), a 27 kDa iron-sulfur protein (IP), a cytochrome B and a membrane-anchoring protein. The cofactor is heme.

It is found in the mitochondrion inner membrane. It participates in carbohydrate metabolism; tricarboxylic acid cycle. In terms of biological role, membrane-anchoring subunit of succinate dehydrogenase (SDH) that is involved in complex II of the mitochondrial electron transport chain and is responsible for transferring electrons from succinate to ubiquinone (coenzyme Q). This Schizosaccharomyces pombe (strain 972 / ATCC 24843) (Fission yeast) protein is Succinate dehydrogenase cytochrome B subunit, mitochondrial (sdh3).